We begin with the raw amino-acid sequence, 201 residues long: Glutathione peroxidase 1 (201 aa).

Ser-32 is modified (phosphoserine). The active site involves Sec-47. Position 47 (Sec-47) is a non-standard amino acid, selenocysteine. An N6-acetyllysine; alternate mark is found at Lys-86, Lys-112, and Lys-146. An N6-succinyllysine; alternate mark is found at Lys-86, Lys-112, and Lys-146. 2 positions are modified to phosphoserine: Ser-195 and Ser-199.

This sequence belongs to the glutathione peroxidase family. In terms of assembly, homotetramer. Interacts with MIEN1. During periods of oxidative stress, Sec-47 may react with a superoxide radical, irreversibly lose hydroselenide and be converted to dehydroalanine.

It localises to the cytoplasm. Its subcellular location is the mitochondrion. It catalyses the reaction 2 glutathione + H2O2 = glutathione disulfide + 2 H2O. The enzyme catalyses a hydroperoxy polyunsaturated fatty acid + 2 glutathione = a hydroxy polyunsaturated fatty acid + glutathione disulfide + H2O. It carries out the reaction tert-butyl hydroperoxide + 2 glutathione = tert-butanol + glutathione disulfide + H2O. The catalysed reaction is cumene hydroperoxide + 2 glutathione = 2-phenylpropan-2-ol + glutathione disulfide + H2O. It catalyses the reaction (13S)-hydroperoxy-(9Z,11E)-octadecadienoate + 2 glutathione = (13S)-hydroxy-(9Z,11E)-octadecadienoate + glutathione disulfide + H2O. The enzyme catalyses (9S)-hydroperoxy-(10E,12Z)-octadecadienoate + 2 glutathione = (9S)-hydroxy-(10E,12Z)-octadecadienoate + glutathione disulfide + H2O. It carries out the reaction (5S)-hydroperoxy-(6E,8Z,11Z,14Z)-eicosatetraenoate + 2 glutathione = (5S)-hydroxy-(6E,8Z,11Z,14Z)-eicosatetraenoate + glutathione disulfide + H2O. The catalysed reaction is (12S)-hydroperoxy-(5Z,8Z,10E,14Z)-eicosatetraenoate + 2 glutathione = (12S)-hydroxy-(5Z,8Z,10E,14Z)-eicosatetraenoate + glutathione disulfide + H2O. It catalyses the reaction (12R)-hydroperoxy-(5Z,8Z,10E,14Z)-eicosatetraenoate + 2 glutathione = (12R)-hydroxy-(5Z,8Z,10E,14Z)-eicosatetraenoate + glutathione disulfide + H2O. The enzyme catalyses (15S)-hydroperoxy-(5Z,8Z,11Z,13E)-eicosatetraenoate + 2 glutathione = (15S)-hydroxy-(5Z,8Z,11Z,13E)-eicosatetraenoate + glutathione disulfide + H2O. It carries out the reaction (5S)-hydroperoxy-(6E,8Z,11Z,14Z,17Z)-eicosapentaenoate + 2 glutathione = (5S)-hydroxy-(6E,8Z,11Z,14Z,17Z)-eicosapentaenoate + glutathione disulfide + H2O. The catalysed reaction is (12S)-hydroperoxy-(5Z,8Z,10E,14Z,17Z)-eicosapentaenoate + 2 glutathione = (12S)-hydroxy-(5Z,8Z,10E,14Z,17Z)-eicosapentaenoate + glutathione disulfide + H2O. It catalyses the reaction (15S)-hydroperoxy-(5Z,8Z,11Z,13E,17Z)-eicosapentaenoate + 2 glutathione = (15S)-hydroxy-(5Z,8Z,11Z,13E,17Z)-eicosapentaenoate + glutathione disulfide + H2O. The enzyme catalyses (15S)-hydroperoxy-(11Z,13E)-eicosadienoate + 2 glutathione = (15S)-hydroxy-(11Z,13E)-eicosadienoate + glutathione disulfide + H2O. It carries out the reaction (17S)-hydroperoxy-(4Z,7Z,10Z,13Z,15E,19Z)-docosahexaenoate + 2 glutathione = (17S)-hydroxy-(4Z,7Z,10Z,13Z,15E,19Z)-docosahexaenoate + glutathione disulfide + H2O. Its function is as follows. Catalyzes the reduction of hydroperoxides in a glutathione-dependent manner thus regulating cellular redox homeostasis. Can reduce small soluble hydroperoxides such as H2O2, cumene hydroperoxide and tert-butyl hydroperoxide, as well as several fatty acid-derived hydroperoxides. In platelets catalyzes the reduction of 12-hydroperoxyeicosatetraenoic acid, the primary product of the arachidonate 12-lipoxygenase pathway. This is Glutathione peroxidase 1 (GPX1) from Callithrix jacchus (White-tufted-ear marmoset).